Here is a 1072-residue protein sequence, read N- to C-terminus: LRR receptor-like serine/threonine-protein kinase RGI5 (1072 aa).

Positions 1–21 (MERERSNFFFLFLFCSWVSMA) are cleaved as a signal peptide. The Extracellular segment spans residues 22–706 (QPTLSLSSDG…NGVKSPKIVA (685 aa)). Cysteine 56 and cysteine 63 are oxidised to a cystine. LRR repeat units lie at residues 66-89 (DNRVISVSIPDTFLNLSSIPDLSS), 90-113 (LSSLQFLNLSSTNLSGPIPPSFGK), 114-138 (LTHLRLLDLSSNSLSGPIPSELGRL), 140-162 (TLQFLILNANKLSGSIPSQISNL), 164-185 (ALQVLCLQDNLLNGSIPSSFGS), 187-211 (VSLQQFRLGGNTNLGGPIPAQLGFL), 212-234 (KNLTTLGFAASGLSGSIPSTFGN), 235-259 (LVNLQTLALYDTEISGTIPPQLGLC), 260-283 (SELRNLYLHMNKLTGSIPKELGKL), 285-307 (KITSLLLWGNSLSGVIPPEISNC), 308-331 (SSLVVFDVSANDLTGDIPGDLGKL), 332-355 (VWLEQLQLSDNMFTGQIPWELSNC), 356-379 (SSLIALQLDKNKLSGSIPSQIGNL), 381-402 (SLQSFFLWENSISGTIPSSFGN), 403-427 (CTDLVALDLSRNKLTGRIPEELFSL), 429-451 (RLSKLLLLGNSLSGGLPKSVAKC), 452-475 (QSLVRLRVGENQLSGQIPKEIGEL), 477-499 (NLVFLDLYMNHFSGGLPYEISNI), 500-523 (TVLELLDVHNNYITGDIPAQLGNL), 524-546 (VNLEQLDLSRNSFTGNIPLSFGN), 548-571 (SYLNKLILNNNLLTGQIPKSIKNL), 572-595 (QKLTLLDLSYNSLSGEIPQELGQV), 597-619 (SLTINLDLSYNTFTGNIPETFSD), 620-642 (LTQLQSLDLSSNSLHGDIKVLGS), and 643-667 (LTSLASLNISCNNFSGPIPSTPFFK). Residues asparagine 80, asparagine 97, and asparagine 102 are each glycosylated (N-linked (GlcNAc...) asparagine). The Small peptide recognition motif lies at 171–172 (QD). Asparagine 176 carries an N-linked (GlcNAc...) asparagine glycan. The short motif at 193 to 196 (RLGG) is the Small peptide recognition element. N-linked (GlcNAc...) asparagine glycosylation occurs at asparagine 213. Short sequence motifs (small peptide recognition) lie at residues 216–221 (TLGFAA), tyrosine 244, and 266–268 (YLH). A glycan (N-linked (GlcNAc...) asparagine) is linked at asparagine 306. Short sequence motifs (small peptide recognition) lie at residues 314-317 (DVSA) and 336-338 (QLQ). Asparagine 354 carries an N-linked (GlcNAc...) asparagine glycan. The short motif at 384 to 388 (SFFLW) is the Small peptide recognition element. Residue asparagine 402 is glycosylated (N-linked (GlcNAc...) asparagine). Short sequence motifs (small peptide recognition) lie at residues 410–413 (DLSR), 432–436 (KLLLL), and 456–458 (RLR). Asparagine 498 is a glycosylation site (N-linked (GlcNAc...) asparagine). The N-linked (GlcNAc...) asparagine glycan is linked to asparagine 546. Asparagine 650 and asparagine 655 each carry an N-linked (GlcNAc...) asparagine glycan. The helical transmembrane segment at 707–727 (LTAVILASITIAILAAWLLIL) threads the bilayer. At 728 to 1072 (RNNHLYKTSQ…SQPLIKPSSS (345 aa)) the chain is on the cytoplasmic side. Threonine 764 carries the post-translational modification Phosphothreonine. In terms of domain architecture, Protein kinase spans 772–1067 (LTDENVIGKG…EWGKTSQPLI (296 aa)). Residues 778-786 (IGKGCSGIV) and lysine 800 contribute to the ATP site. Residues tyrosine 851 and tyrosine 887 each carry the phosphotyrosine modification. Aspartate 900 acts as the Proton acceptor in catalysis. Serine 936 carries the phosphoserine modification. 2 positions are modified to phosphotyrosine: tyrosine 944 and tyrosine 951. Threonine 952 bears the Phosphothreonine mark.

The protein belongs to the protein kinase superfamily. Ser/Thr protein kinase family. Binds to RGF1; this interaction triggers the formation of heterodimers with SERK1. In terms of processing, phosphorylated and ubiquitinated upon interaction with RGF1, thus leading to activation a subsequent degradation. Post-translationally, autophosphorylated. In terms of tissue distribution, expressed in roots and hypocotyls.

The protein resides in the membrane. It carries out the reaction L-seryl-[protein] + ATP = O-phospho-L-seryl-[protein] + ADP + H(+). It catalyses the reaction L-threonyl-[protein] + ATP = O-phospho-L-threonyl-[protein] + ADP + H(+). In terms of biological role, together with RGI1, RGI2, RGI3 and RGI4, acts as a receptor of RGF1, a peptide hormone that maintains the postembryonic root stem cell niche by regulating the expression levels and patterns of the transcription factor PLETHORA (PLT). Links RGF1 signal with its downstream components. The sequence is that of LRR receptor-like serine/threonine-protein kinase RGI5 from Arabidopsis thaliana (Mouse-ear cress).